Consider the following 696-residue polypeptide: Probable glutamine--fructose-6-phosphate aminotransferase [isomerizing] (696 aa).

Cysteine 2 serves as the catalytic For GATase activity. Positions 2 to 303 (CGIFGYINYL…DDDIAHVRDG (302 aa)) constitute a Glutamine amidotransferase type-2 domain. 2 consecutive SIS domains span residues 375-514 (YYDI…DSVS) and 547-686 (AIEQ…VDQP).

It catalyses the reaction D-fructose 6-phosphate + L-glutamine = D-glucosamine 6-phosphate + L-glutamate. Its pathway is nucleotide-sugar biosynthesis; UDP-N-acetyl-alpha-D-glucosamine biosynthesis; alpha-D-glucosamine 6-phosphate from D-fructose 6-phosphate: step 1/1. Involved in amino sugar synthesis (formation of chitin, supplies the amino sugars of asparagine-linked oligosaccharides of glycoproteins). This is Probable glutamine--fructose-6-phosphate aminotransferase [isomerizing] from Schizosaccharomyces pombe (strain 972 / ATCC 24843) (Fission yeast).